Consider the following 214-residue polypeptide: CASP-like protein 3A1 (214 aa).

Residues 1–49 are Cytoplasmic-facing; sequence MTNGQKIEVAVQLPESKVAATENNETMSGPLVVGGGVAKPFGRKADVMH. A helical membrane pass occupies residues 50–70; it reads VILRLLCTITSVTAVSFMVTA. Over 71–96 the chain is Extracellular; that stretch reads HQSSTVSIYGFMLPVRSKWSFSHSFE. The helical transmembrane segment at 97 to 117 threads the bilayer; the sequence is YLVGVSAAVAAHSLLQLLISM. Over 118-132 the chain is Cytoplasmic; sequence SRLLRKSPVIPSRSH. A helical membrane pass occupies residues 133 to 153; it reads AWLIFAGDQVFAYAMISAGAA. Residues 154–182 are Extracellular-facing; the sequence is ASGVTNLNRTGIQHTALPNFCKPLNYFCN. Residue Asn-161 is glycosylated (N-linked (GlcNAc...) asparagine). A helical membrane pass occupies residues 183–203; sequence HVAVSIAFAFISCLLLAALAV. The Cytoplasmic portion of the chain corresponds to 204 to 214; that stretch reads QEVIWLSKSKY.

The protein belongs to the Casparian strip membrane proteins (CASP) family. In terms of assembly, homodimer and heterodimers.

The protein localises to the cell membrane. This Ricinus communis (Castor bean) protein is CASP-like protein 3A1.